A 205-amino-acid chain; its full sequence is uncharacterized protein (205 aa).

The N-terminal stretch at 1–40 (MSAGKSYRKKMKQRRMNMKISKYALGILMLSLVFVLSACG) is a signal peptide. A disordered region spans residues 44 to 82 (STKESTHDNHSDSSTHEEMDHSGSADVPEGLQESKNPKY). The segment covering 47 to 66 (ESTHDNHSDSSTHEEMDHSG) has biased composition (basic and acidic residues).

This is an uncharacterized protein from Bacillus subtilis (strain 168).